The following is a 131-amino-acid chain: Aspartate 1-decarboxylase (131 aa).

Ser25 functions as the Schiff-base intermediate with substrate; via pyruvic acid in the catalytic mechanism. A Pyruvic acid (Ser) modification is found at Ser25. A substrate-binding site is contributed by Thr57. The active-site Proton donor is the Tyr58. A substrate-binding site is contributed by Gly73 to Ala75. The interval Asn112–Ile131 is disordered. A compositionally biased stretch (polar residues) spans Val113–Ile131.

This sequence belongs to the PanD family. As to quaternary structure, heterooctamer of four alpha and four beta subunits. Requires pyruvate as cofactor. Post-translationally, is synthesized initially as an inactive proenzyme, which is activated by self-cleavage at a specific serine bond to produce a beta-subunit with a hydroxyl group at its C-terminus and an alpha-subunit with a pyruvoyl group at its N-terminus.

The protein localises to the cytoplasm. The enzyme catalyses L-aspartate + H(+) = beta-alanine + CO2. The protein operates within cofactor biosynthesis; (R)-pantothenate biosynthesis; beta-alanine from L-aspartate: step 1/1. Functionally, catalyzes the pyruvoyl-dependent decarboxylation of aspartate to produce beta-alanine. This chain is Aspartate 1-decarboxylase, found in Syntrophotalea carbinolica (strain DSM 2380 / NBRC 103641 / GraBd1) (Pelobacter carbinolicus).